Consider the following 393-residue polypeptide: MSASPKGFRFATVSAGFRKEARPDLALIVSDTPATAAGVFTTNRFQAAPVVVARENLSARPVARAVVINSGQANACTGDEGMTNCRTTLDLVGKACGIPAAEVLPASTGVIGAQLHMDKWREAAPRLAAALGQNTHHDFARAIMTTDAFPKVAERELAIAGTTVRLVGMAKGAGMICPNMATMLSVVLCDAAVTPEAWQRLFLDAVDRTFNRVTVDGDTSTNDTVFGLANGASGVTVEGEDLAKLGEALTDVLARLAYMLVQDGEGATKVMRVKVSGAVDDAEAEAVARTVGHSQLVKTAMYGRDANWGRIVAAVGRSGASFKAEDVVVTLCGVELFRNGQPTDLDFDTLLREPLKGRDVTVDIELGAGTGHYELLASDLTHDYVNCNADYRS.

Positions 145, 171, 182, 265, 388, and 393 each coordinate substrate. The Nucleophile role is filled by T182.

It belongs to the ArgJ family. Heterotetramer of two alpha and two beta chains.

The protein localises to the cytoplasm. The enzyme catalyses N(2)-acetyl-L-ornithine + L-glutamate = N-acetyl-L-glutamate + L-ornithine. It catalyses the reaction L-glutamate + acetyl-CoA = N-acetyl-L-glutamate + CoA + H(+). Its pathway is amino-acid biosynthesis; L-arginine biosynthesis; L-ornithine and N-acetyl-L-glutamate from L-glutamate and N(2)-acetyl-L-ornithine (cyclic): step 1/1. It functions in the pathway amino-acid biosynthesis; L-arginine biosynthesis; N(2)-acetyl-L-ornithine from L-glutamate: step 1/4. Its function is as follows. Catalyzes two activities which are involved in the cyclic version of arginine biosynthesis: the synthesis of N-acetylglutamate from glutamate and acetyl-CoA as the acetyl donor, and of ornithine by transacetylation between N(2)-acetylornithine and glutamate. The chain is Arginine biosynthesis bifunctional protein ArgJ from Nitratidesulfovibrio vulgaris (strain ATCC 29579 / DSM 644 / CCUG 34227 / NCIMB 8303 / VKM B-1760 / Hildenborough) (Desulfovibrio vulgaris).